The sequence spans 81 residues: Small ribosomal subunit protein bS16 (81 aa).

It belongs to the bacterial ribosomal protein bS16 family.

The sequence is that of Small ribosomal subunit protein bS16 from Alkaliphilus oremlandii (strain OhILAs) (Clostridium oremlandii (strain OhILAs)).